A 149-amino-acid polypeptide reads, in one-letter code: SsrA-binding protein (149 aa).

This sequence belongs to the SmpB family.

It is found in the cytoplasm. Required for rescue of stalled ribosomes mediated by trans-translation. Binds to transfer-messenger RNA (tmRNA), required for stable association of tmRNA with ribosomes. tmRNA and SmpB together mimic tRNA shape, replacing the anticodon stem-loop with SmpB. tmRNA is encoded by the ssrA gene; the 2 termini fold to resemble tRNA(Ala) and it encodes a 'tag peptide', a short internal open reading frame. During trans-translation Ala-aminoacylated tmRNA acts like a tRNA, entering the A-site of stalled ribosomes, displacing the stalled mRNA. The ribosome then switches to translate the ORF on the tmRNA; the nascent peptide is terminated with the 'tag peptide' encoded by the tmRNA and targeted for degradation. The ribosome is freed to recommence translation, which seems to be the essential function of trans-translation. This chain is SsrA-binding protein, found in Wolbachia pipientis wMel.